A 196-amino-acid polypeptide reads, in one-letter code: DnaA initiator-associating protein DiaA (196 aa).

Residues 34–196 (LVQSLLNGNK…DNTLFPHQDD (163 aa)) enclose the SIS domain.

This sequence belongs to the SIS family. DiaA subfamily. In terms of assembly, homotetramer; dimer of dimers.

Required for the timely initiation of chromosomal replication via direct interactions with the DnaA initiator protein. The protein is DnaA initiator-associating protein DiaA of Yersinia pseudotuberculosis serotype O:1b (strain IP 31758).